An 829-amino-acid polypeptide reads, in one-letter code: Periplasmic nitrate reductase (829 aa).

A signal peptide (tat-type signal) is located at residues 1-30 (MKMTRRAFVKANAAASAAAVAGITLPASAA). The region spanning 41–97 (ITWDKAPCRFCGTGCSVLVGTQNGKVVATQGDPEAPVNKGLNCIKGYFLSKIMYGQD) is the 4Fe-4S Mo/W bis-MGD-type domain. Cysteine 48, cysteine 51, cysteine 55, and cysteine 83 together coordinate [4Fe-4S] cluster. Mo-bis(molybdopterin guanine dinucleotide) contacts are provided by residues lysine 85, glutamine 152, asparagine 177, cysteine 181, 214 to 221 (WGSNMAEM), 245 to 249 (STYYH), 264 to 266 (QSD), methionine 374, glutamine 378, asparagine 484, 510 to 511 (SD), lysine 533, aspartate 560, and 718 to 727 (TGRVLEHWHT). A substrate-binding site is contributed by phenylalanine 794. The Mo-bis(molybdopterin guanine dinucleotide) site is built by asparagine 802 and lysine 819.

The protein belongs to the prokaryotic molybdopterin-containing oxidoreductase family. NasA/NapA/NarB subfamily. In terms of assembly, component of the periplasmic nitrate reductase NapAB complex composed of NapA and NapB. [4Fe-4S] cluster is required as a cofactor. Requires Mo-bis(molybdopterin guanine dinucleotide) as cofactor. Predicted to be exported by the Tat system. The position of the signal peptide cleavage has not been experimentally proven.

The protein localises to the periplasm. It carries out the reaction 2 Fe(II)-[cytochrome] + nitrate + 2 H(+) = 2 Fe(III)-[cytochrome] + nitrite + H2O. Catalytic subunit of the periplasmic nitrate reductase complex NapAB. Receives electrons from NapB and catalyzes the reduction of nitrate to nitrite. This Vibrio parahaemolyticus serotype O3:K6 (strain RIMD 2210633) protein is Periplasmic nitrate reductase.